Consider the following 346-residue polypeptide: Coproporphyrin III ferrochelatase (346 aa).

Residues Ser52 and Tyr121 each contribute to the Fe-coproporphyrin III site. Residues His181 and Glu264 each coordinate Fe(2+).

Belongs to the ferrochelatase family.

It is found in the cytoplasm. The catalysed reaction is Fe-coproporphyrin III + 2 H(+) = coproporphyrin III + Fe(2+). The protein operates within porphyrin-containing compound metabolism; protoheme biosynthesis. Involved in coproporphyrin-dependent heme b biosynthesis. Catalyzes the insertion of ferrous iron into coproporphyrin III to form Fe-coproporphyrin III. This Mycobacterium sp. (strain KMS) protein is Coproporphyrin III ferrochelatase.